The following is a 291-amino-acid chain: Acetyl-coenzyme A carboxylase carboxyl transferase subunit beta (291 aa).

The disordered stretch occupies residues 1 to 23; it reads MSWLSKLMPSGIRTDNTPSKKRS. In terms of domain architecture, CoA carboxyltransferase N-terminal spans 28 to 291; sequence LWEKCSNCGS…LGRQPAPEVA (264 aa). Zn(2+) is bound by residues Cys32, Cys35, Cys51, and Cys54. A C4-type zinc finger spans residues 32–54; it reads CSNCGSALYRPELEENLEVCPKC.

This sequence belongs to the AccD/PCCB family. Acetyl-CoA carboxylase is a heterohexamer composed of biotin carboxyl carrier protein (AccB), biotin carboxylase (AccC) and two subunits each of ACCase subunit alpha (AccA) and ACCase subunit beta (AccD). It depends on Zn(2+) as a cofactor.

It is found in the cytoplasm. The enzyme catalyses N(6)-carboxybiotinyl-L-lysyl-[protein] + acetyl-CoA = N(6)-biotinyl-L-lysyl-[protein] + malonyl-CoA. It participates in lipid metabolism; malonyl-CoA biosynthesis; malonyl-CoA from acetyl-CoA: step 1/1. Functionally, component of the acetyl coenzyme A carboxylase (ACC) complex. Biotin carboxylase (BC) catalyzes the carboxylation of biotin on its carrier protein (BCCP) and then the CO(2) group is transferred by the transcarboxylase to acetyl-CoA to form malonyl-CoA. The polypeptide is Acetyl-coenzyme A carboxylase carboxyl transferase subunit beta (Stenotrophomonas maltophilia (strain R551-3)).